A 73-amino-acid polypeptide reads, in one-letter code: Large ribosomal subunit protein bL31c (73 aa).

The protein belongs to the bacterial ribosomal protein bL31 family. Type A subfamily. As to quaternary structure, part of the 50S ribosomal subunit.

Its subcellular location is the plastid. The protein localises to the chloroplast. Binds the 23S rRNA. The sequence is that of Large ribosomal subunit protein bL31c from Palmaria palmata (Dulse).